The sequence spans 576 residues: Alpha-bisabolol synthase (576 aa).

(2E,6E)-farnesyl diphosphate is bound by residues Arg-286, Asp-323, Asp-327, Arg-466, and Asn-469. Mg(2+)-binding residues include Asp-323 and Asp-327. Residues Asp-323–Asp-327 carry the DDXXD motif motif. Residues Asn-469, Thr-473, and Glu-477 each coordinate Mg(2+).

The protein belongs to the terpene synthase family. Tpsb subfamily. Mg(2+) is required as a cofactor. Mn(2+) serves as cofactor.

Its function is as follows. Produces a mixture of beta-bisabolene and alpha-bisabolol, along with traces of alpha-bisabolene and farnesene isomers from (2E,6E)-farnesyl diphosphate in fragrance biosynthesis. The chain is Alpha-bisabolol synthase from Santalum spicatum (Australian sandalwood).